Reading from the N-terminus, the 886-residue chain is MSGTEEDLCHRMKVVVRVRPENTKEKAVQFCKVVHVVDKHILSFDPKQEEISFFHRKKTTNFDITKRQNKDLKFVFDAVFDETSTQMEVFEHTTKPILHSFLNGYNCTVFAYGATGSGKTHTMLGSAAEPGVMYLTMLDLFKCIDEIKEEKECSTAVSYLEVYNEQIRDLLTNSGPLAVREDSQKGVVVQGLTLHQPKSSEEILQLLDNGNKNRTQHPTDVNAVSSRSHAVFQIYLRQQDKTASINQNVRIAKMSLIDLAGSERASVSGAKGSRFVEGTNINKSLLALGNVINALANTKRRNQHIPYRNSKLTRLLKDSLGGNCQTIMIAAVSPSSLFYDDTYNTLKYANRAKEIKSSLKSNVLNLNSHISQYVKICNMQKAEILMLKEKLKAYEEQKALSDRNDCAKLVHSNPEDRETERFQEILNCLFQNREGIRQEYLKLEMLLKANALKSSYHQQCHKQIEMMCSEDKVEKATCKRDHRLEKLKTNSCFLEKKKEEVSKQFDENTNWLHRVENEMRLLGQNGDIPEALNKELHCHHLHLQNKELKTQMAHMTALACLQEQQHKQTEAVLNALLPVLRKQYWKLKETGLSNAAFDSDFKDIEHLVERKKVVAWADQTNEHSNRNDLPGISLLMTFPQLEPIQSISCCTSVSDPNVLKLTPQRRTRRKIIPSPLKVQHTQKSALSESTQLNDSFSKELQPIVYTPEDCKKAQDLFPSLTRTSSQSANVMNDNSQKALCRIESPLSRTECKQGLYSTSTLCDSIRGLKNKWPEQEPLASSKSSVHRIESSSFSTKDSMPESAGVPSYMAMTTAAKRKWKQMSSTSNASIKSDESCGFAKRIRRDNSSVKPMQENRLKVGYKRNTNKTNSNMLRKFRRNTSKENVQ.

Residues 11-355 enclose the Kinesin motor domain; the sequence is RMKVVVRVRP…LKYANRAKEI (345 aa). Lys-24 participates in a covalent cross-link: Glycyl lysine isopeptide (Lys-Gly) (interchain with G-Cter in SUMO2). Residue 113–120 coordinates ATP; that stretch reads GATGSGKT. Residues 370 to 404 adopt a coiled-coil conformation; the sequence is ISQYVKICNMQKAEILMLKEKLKAYEEQKALSDRN. The residue at position 674 (Ser-674) is a Phosphoserine. Lys-683 participates in a covalent cross-link: Glycyl lysine isopeptide (Lys-Gly) (interchain with G-Cter in SUMO2). Position 695 is a phosphoserine (Ser-695). A disordered region spans residues 774–804; it reads EQEPLASSKSSVHRIESSSFSTKDSMPESAG. A Glycyl lysine isopeptide (Lys-Gly) (interchain with G-Cter in SUMO2) cross-link involves residue Lys-782. Ser-826 bears the Phosphoserine mark. Lys-862 participates in a covalent cross-link: Glycyl lysine isopeptide (Lys-Gly) (interchain with G-Cter in SUMO2). Positions 862 to 886 are disordered; sequence KRNTNKTNSNMLRKFRRNTSKENVQ.

Belongs to the TRAFAC class myosin-kinesin ATPase superfamily. Kinesin family. Interacts with CENPE and ESR1. Post-translationally, glycosylated. Ubiquitinated.

The protein resides in the cell projection. It localises to the ruffle. It is found in the cytoplasm. The protein localises to the nucleus. Its subcellular location is the cytoskeleton. The protein resides in the microtubule organizing center. It localises to the centrosome. Its function is as follows. Microtubule-depolymerizing kinesin which plays a role in chromosome congression by reducing the amplitude of preanaphase oscillations and slowing poleward movement during anaphase, thus suppressing chromosome movements. May stabilize the CENPE-BUB1B complex at the kinetochores during early mitosis and maintains CENPE levels at kinetochores during chromosome congression. This chain is Kinesin-like protein KIF18A (Kif18a), found in Mus musculus (Mouse).